Here is a 156-residue protein sequence, read N- to C-terminus: Small ribosomal subunit protein uS7 (156 aa).

It belongs to the universal ribosomal protein uS7 family. In terms of assembly, part of the 30S ribosomal subunit. Contacts proteins S9 and S11.

One of the primary rRNA binding proteins, it binds directly to 16S rRNA where it nucleates assembly of the head domain of the 30S subunit. Is located at the subunit interface close to the decoding center, probably blocks exit of the E-site tRNA. The protein is Small ribosomal subunit protein uS7 of Phytoplasma australiense.